A 500-amino-acid polypeptide reads, in one-letter code: NAD(P)H-quinone oxidoreductase chain 4, chloroplastic (500 aa).

Transmembrane regions (helical) follow at residues 4-24, 35-55, 80-100, 113-130, 134-154, 167-187, 208-228, 242-262, 274-294, 305-325, 330-350, 364-384, 386-406, 416-436, and 462-482; these read FYWL…IALL, YTIC…CYHF, LGID…TTLA, LFHF…GSFS, LLLF…LLSM, FILY…GMGL, ALEI…SPII, HYST…YGLV, SIFS…AALT, IAYS…SITD, GAIL…FLAG, MGGI…FSMA, LALP…GIIT, ILIT…SLSM, and IFIF…PDFV.

It belongs to the complex I subunit 4 family.

It localises to the plastid. The protein localises to the chloroplast thylakoid membrane. The catalysed reaction is a plastoquinone + NADH + (n+1) H(+)(in) = a plastoquinol + NAD(+) + n H(+)(out). It carries out the reaction a plastoquinone + NADPH + (n+1) H(+)(in) = a plastoquinol + NADP(+) + n H(+)(out). In Nymphaea alba (White water-lily), this protein is NAD(P)H-quinone oxidoreductase chain 4, chloroplastic.